Here is a 588-residue protein sequence, read N- to C-terminus: MGGTARGPGRKDAGPPGAGLPPQQRRLGDGVYDTFMMIDETKCPPCSNVLCNPSEPPPPRRLNMTTEQFTGDHTQHFLDGGEMKVEQLFQEFGNRKSNTIQSDGISDSEKCSPTVSQGKSSDCLNTVKSNSSSKAPKVVPLTPEQALKQYKHHLTAYEKLEIINYPEIYFVGPNAKKRHGVIGGPNNGGYDDADGAYIHVPRDHLAYRYEVLKIIGKGSFGQVARVYDHKLRQYVALKMVRNEKRFHRQAAEEIRILEHLKKQDKTGSMNVIHMLESFTFRNHVCMAFELLSIDLYELIKKNKFQGFSVQLVRKFAQSILQSLDALHKNKIIHCDLKPENILLKHHGRSSTKVIDFGSSCFEYQKLYTYIQSRFYRAPEIILGSRYSTPIDIWSFGCILAELLTGQPLFPGEDEGDQLACMMELLGMPPPKLLEQSKRAKYFINSKGIPRYCSVTTQADGRVVLVGGRSRRGKKRGPPGSKDWGTALKGCDDYLFIEFLKRCLHWDPSARLTPAQALRHPWISKSVPRPLTTIDKVSGKRVVNPASAFQGLGSKLPPVVGIANKLKANLMSETNGSIPLCSVLPKLIS.

Positions 1 to 188 are disordered; the sequence is MGGTARGPGR…HGVIGGPNNG (188 aa). A compositionally biased stretch (polar residues) spans 97-134; that stretch reads SNTIQSDGISDSEKCSPTVSQGKSSDCLNTVKSNSSSK. A Protein kinase domain is found at 209–522; sequence YEVLKIIGKG…PAQALRHPWI (314 aa). Residues 215–223, K238, and 288–291 contribute to the ATP site; these read IGKGSFGQV and FELL. The Proton acceptor role is filled by D335. S350 carries the phosphoserine modification. Y369 is subject to Phosphotyrosine. Residues 468 to 481 carry the Nuclear localization signal motif; it reads RSRRGKKRGPPGSK.

It belongs to the protein kinase superfamily. CMGC Ser/Thr protein kinase family. MNB/DYRK subfamily. Interacts with SIRT1. Mg(2+) serves as cofactor. In terms of processing, ubiquitinated at anaphase by the anaphase-promoting complex (APC/C), leading to its degradation by the proteasome. Protein kinase activity is activated following autophosphorylation at Tyr-369. Autophosphorylation at Ser-350 stabilizes the protein and enhances the protein kinase activity. As to expression, isoform 1: Highly expressed in testis and in hematopoietic tissue such as fetal liver, and bone marrow. Isoform 1: Predominant form in fetal liver and bone marrow. Isoform 1: Present at low levels in heart, pancreas, lymph node and thymus. Isoform 2: Highly expressed in testis and in hematopoietic tissue such as fetal liver, and bone marrow. Isoform 2: Predominant form in testis. Isoform 2: Present at low levels in heart, pancreas, lymph node and thymus.

It is found in the nucleus. Its subcellular location is the cytoplasm. It localises to the nucleus speckle. The protein resides in the cytoplasmic granule. The protein localises to the cytoskeleton. It is found in the microtubule organizing center. Its subcellular location is the centrosome. It catalyses the reaction L-seryl-[protein] + ATP = O-phospho-L-seryl-[protein] + ADP + H(+). The catalysed reaction is L-threonyl-[protein] + ATP = O-phospho-L-threonyl-[protein] + ADP + H(+). The enzyme catalyses L-tyrosyl-[protein] + ATP = O-phospho-L-tyrosyl-[protein] + ADP + H(+). Its activity is regulated as follows. Protein kinase activity is activated following autophosphorylation at Tyr-369. Inhibited by harmine, an ATP competitive inhibitor. Inhibited by small-compound GSK-626616. Dual-specificity protein kinase that promotes disassembly of several types of membraneless organelles during mitosis, such as stress granules, nuclear speckles and pericentriolar material. Dual-specificity tyrosine-regulated kinases (DYRKs) autophosphorylate a critical tyrosine residue in their activation loop and phosphorylate their substrate on serine and threonine residues. Acts as a central dissolvase of membraneless organelles during the G2-to-M transition, after the nuclear-envelope breakdown: acts by mediating phosphorylation of multiple serine and threonine residues in unstructured domains of proteins, such as SRRM1 and PCM1. Does not mediate disassembly of all membraneless organelles: disassembly of P-body and nucleolus is not regulated by DYRK3. Dissolution of membraneless organelles at the onset of mitosis is also required to release mitotic regulators, such as ZNF207, from liquid-unmixed organelles where they are sequestered and keep them dissolved during mitosis. Regulates mTORC1 by mediating the dissolution of stress granules: during stressful conditions, DYRK3 partitions from the cytosol to the stress granule, together with mTORC1 components, which prevents mTORC1 signaling. When stress signals are gone, the kinase activity of DYRK3 is required for the dissolution of stress granule and mTORC1 relocation to the cytosol: acts by mediating the phosphorylation of the mTORC1 inhibitor AKT1S1, allowing full reactivation of mTORC1 signaling. Also acts as a negative regulator of EPO-dependent erythropoiesis: may place an upper limit on red cell production during stress erythropoiesis. Inhibits cell death due to cytokine withdrawal in hematopoietic progenitor cells. Promotes cell survival upon genotoxic stress through phosphorylation of SIRT1: this in turn inhibits p53/TP53 activity and apoptosis. The sequence is that of Dual specificity tyrosine-phosphorylation-regulated kinase 3 from Homo sapiens (Human).